A 614-amino-acid polypeptide reads, in one-letter code: Two-component response regulator ORR33 (614 aa).

The Response regulatory domain occupies 14–139 (RVMIIDDDAK…VMARLWRVVA (126 aa)). Aspartate 67 bears the 4-aspartylphosphate mark. The tract at residues 193-220 (RQLTINVVDDGNRGSGSGGGGGGGADAN) is disordered. Residues 205-217 (RGSGSGGGGGGGA) are compositionally biased toward gly residues.

It belongs to the ARR family. Type-B subfamily. Two-component system major event consists of a His-to-Asp phosphorelay between a sensor histidine kinase (HK) and a response regulator (RR). In plants, the His-to-Asp phosphorelay involves an additional intermediate named Histidine-containing phosphotransfer protein (HPt). This multistep phosphorelay consists of a His-Asp-His-Asp sequential transfer of a phosphate group between first a His and an Asp of the HK protein, followed by the transfer to a conserved His of the HPt protein and finally the transfer to an Asp in the receiver domain of the RR protein.

Its function is as follows. Functions as a response regulator involved in His-to-Asp phosphorelay signal transduction system. Phosphorylation of the Asp residue in the receiver domain activates the ability of the protein to promote the transcription of target genes. May directly activate some type-A response regulators in response to cytokinins. This chain is Two-component response regulator ORR33, found in Oryza sativa subsp. indica (Rice).